Reading from the N-terminus, the 457-residue chain is UDP-N-acetylmuramate--L-alanine ligase (457 aa).

Gly109–Thr115 contributes to the ATP binding site.

This sequence belongs to the MurCDEF family.

The protein resides in the cytoplasm. It catalyses the reaction UDP-N-acetyl-alpha-D-muramate + L-alanine + ATP = UDP-N-acetyl-alpha-D-muramoyl-L-alanine + ADP + phosphate + H(+). It participates in cell wall biogenesis; peptidoglycan biosynthesis. In terms of biological role, cell wall formation. The chain is UDP-N-acetylmuramate--L-alanine ligase (murC) from Thermotoga maritima (strain ATCC 43589 / DSM 3109 / JCM 10099 / NBRC 100826 / MSB8).